Here is a 401-residue protein sequence, read N- to C-terminus: Sodium/glutamate symporter (401 aa).

Topologically, residues 1–6 are periplasmic; that stretch reads MFHLDT. Residues 7–24 traverse the membrane as a helical segment; it reads LATLVAATLTLLLGRKLV. Residues 25–32 are Cytoplasmic-facing; sequence HSVSFLKK. The helical transmembrane segment at 33–52 threads the bilayer; it reads YTIPEPVAGGLLVALALLVL. The Periplasmic portion of the chain corresponds to 53-69; sequence KKSMGWEVNFDMSLRDP. Residues 70-87 form a helical membrane-spanning segment; the sequence is LMLAFFATIGLNANIASL. At 88–93 the chain is on the cytoplasmic side; it reads RAGGRV. Residues 94 to 116 traverse the membrane as a helical segment; it reads VGIFLIVVVGLLVMQNAIGIGMA. Residues 117 to 156 lie on the Periplasmic side of the membrane; the sequence is SLLGLDPLMGLLAGSITLSGGHGTGAAWSKLFIERYGFTN. A helical transmembrane segment spans residues 157-179; it reads ATEVAMACATFGLVLGGLIGGPV. Topologically, residues 180-212 are cytoplasmic; sequence ARYLVKHSTTPNGIPDDQEVPTAFEKPDVGRMI. The helical transmembrane segment at 213–235 threads the bilayer; it reads TSLVLIETIALIAICLTVGKIVA. The Periplasmic portion of the chain corresponds to 236–244; that stretch reads QLLAGTAFE. A helical transmembrane segment spans residues 245-267; it reads LPTFVCVLFVGVILSNGLSIMGF. The Cytoplasmic segment spans residues 268-276; sequence YRVFERAVS. The helical transmembrane segment at 277-292 threads the bilayer; the sequence is VLGNVSLSLFLAMALM. Residues 293–301 lie on the Periplasmic side of the membrane; sequence GLKLWELAS. A helical transmembrane segment spans residues 302 to 324; the sequence is LALPMLAILVVQTIFMALYAIFV. Over 325–367 the chain is Cytoplasmic; sequence TWRMMGKNYDAAVLAAGHCGFGLGATPTAIANMQAITERFGPS. A helical transmembrane segment spans residues 368–390; that stretch reads HMAFLVVPMVGAFFIDIVNALVI. The Periplasmic portion of the chain corresponds to 391 to 401; sequence KLYLMLPIFAG.

This sequence belongs to the glutamate:Na(+) symporter (ESS) (TC 2.A.27) family.

Its subcellular location is the cell inner membrane. Inhibited by the uncoupler carbonylcyanide m-chlorophenylhydrazone (CCCP) and the ionophore monensin. Its function is as follows. Catalyzes the sodium-dependent, binding-protein-independent transport of glutamate. This Escherichia coli (strain K12) protein is Sodium/glutamate symporter.